A 439-amino-acid chain; its full sequence is GTPase Obg (439 aa).

Positions Ile-4–Leu-162 constitute an Obg domain. The region spanning Ala-163–Lys-336 is the OBG-type G domain. GTP is bound by residues Gly-169–Ser-176, Phe-194–Val-198, Asp-218–Gly-221, Asn-288–Asp-291, and Ser-317–Val-319. Mg(2+) contacts are provided by Ser-176 and Thr-196. Residues Leu-361–Glu-439 form the OCT domain.

The protein belongs to the TRAFAC class OBG-HflX-like GTPase superfamily. OBG GTPase family. Monomer. Mg(2+) is required as a cofactor.

It localises to the cytoplasm. An essential GTPase which binds GTP, GDP and possibly (p)ppGpp with moderate affinity, with high nucleotide exchange rates and a fairly low GTP hydrolysis rate. Plays a role in control of the cell cycle, stress response, ribosome biogenesis and in those bacteria that undergo differentiation, in morphogenesis control. This chain is GTPase Obg, found in Fervidobacterium nodosum (strain ATCC 35602 / DSM 5306 / Rt17-B1).